The chain runs to 153 residues: NAD(P)H-quinone oxidoreductase subunit N (153 aa).

The protein belongs to the complex I NdhN subunit family. As to quaternary structure, NDH-1 can be composed of about 15 different subunits; different subcomplexes with different compositions have been identified which probably have different functions.

The protein resides in the cellular thylakoid membrane. The enzyme catalyses a plastoquinone + NADH + (n+1) H(+)(in) = a plastoquinol + NAD(+) + n H(+)(out). The catalysed reaction is a plastoquinone + NADPH + (n+1) H(+)(in) = a plastoquinol + NADP(+) + n H(+)(out). In terms of biological role, NDH-1 shuttles electrons from an unknown electron donor, via FMN and iron-sulfur (Fe-S) centers, to quinones in the respiratory and/or the photosynthetic chain. The immediate electron acceptor for the enzyme in this species is believed to be plastoquinone. Couples the redox reaction to proton translocation, and thus conserves the redox energy in a proton gradient. Cyanobacterial NDH-1 also plays a role in inorganic carbon-concentration. The protein is NAD(P)H-quinone oxidoreductase subunit N of Prochlorococcus marinus (strain MIT 9313).